The following is a 234-amino-acid chain: Cyclo(L-leucyl-L-leucyl) synthase (234 aa).

The active-site Nucleophile is the Ser28. Substrate is bound by residues 171-175 (YVLAE), Tyr195, and 200-201 (EL).

This sequence belongs to the CDPS family.

The catalysed reaction is 2 L-leucyl-tRNA(Leu) = cyclo(L-leucyl-L-leucyl) + 2 tRNA(Leu) + 2 H(+). Functionally, it uses activated amino acids in the form of aminoacyl-tRNAs (aa-tRNAs) as substrates to catalyze the ATP-independent formation of cyclodipeptides which are intermediates in diketopiperazine (DKP) biosynthetic pathways. Catalyzes the formation of cyclo(L-Leu-L-Leu) (cLL) from L-leucyl-tRNA(Leu). Can incorporate various nonpolar residues, such as L-phenylalanine, L-leucine and L-methionine, into cyclodipeptides. This chain is Cyclo(L-leucyl-L-leucyl) synthase, found in Staphylococcus haemolyticus (strain JCSC1435).